The sequence spans 162 residues: Cyclic pyranopterin monophosphate synthase (162 aa).

Substrate is bound by residues 75–77 (LCH) and 113–114 (ME). Aspartate 128 is an active-site residue.

This sequence belongs to the MoaC family. In terms of assembly, homohexamer; trimer of dimers.

The catalysed reaction is (8S)-3',8-cyclo-7,8-dihydroguanosine 5'-triphosphate = cyclic pyranopterin phosphate + diphosphate. The protein operates within cofactor biosynthesis; molybdopterin biosynthesis. Its function is as follows. Catalyzes the conversion of (8S)-3',8-cyclo-7,8-dihydroguanosine 5'-triphosphate to cyclic pyranopterin monophosphate (cPMP). The protein is Cyclic pyranopterin monophosphate synthase of Klebsiella pneumoniae (strain 342).